The primary structure comprises 1023 residues: Rho GTPase-activating protein 11A (1023 aa).

Residues 49-239 (VPFNALPHSA…TLIDYASDIG (191 aa)) enclose the Rho-GAP domain. Position 285 is a phosphoserine (serine 285). A Phosphothreonine modification is found at threonine 306. Phosphoserine occurs at positions 316 and 318. Threonine 323 is modified (phosphothreonine). Serine 339, serine 340, and serine 484 each carry phosphoserine. Threonine 508 is modified (phosphothreonine). The tract at residues 567 to 589 (TPSNLNNKHNSNITSSPLSGDEN) is disordered. Residues serine 582, serine 585, serine 638, and serine 675 each carry the phosphoserine modification. Residues 714 to 734 (KQEFSSDEEIKKQQSPKDKLN) form a disordered region. Residues 721-734 (EEIKKQQSPKDKLN) are compositionally biased toward basic and acidic residues. Residue serine 847 is modified to Phosphoserine. Residue threonine 866 is modified to Phosphothreonine. A Phosphoserine modification is found at serine 868. The disordered stretch occupies residues 999–1023 (AWYKGSPKHPIGKTQLLPTSKPVDL).

Its subcellular location is the nucleus. GTPase activator for the Rho-type GTPases by converting them to an inactive GDP-bound state. The sequence is that of Rho GTPase-activating protein 11A from Homo sapiens (Human).